A 61-amino-acid chain; its full sequence is uncharacterized protein (61 aa).

This is an uncharacterized protein from Dictyostelium discoideum (Social amoeba).